We begin with the raw amino-acid sequence, 159 residues long: Ribosome maturation factor RimP (159 aa).

This sequence belongs to the RimP family.

Its subcellular location is the cytoplasm. In terms of biological role, required for maturation of 30S ribosomal subunits. This Geobacter sulfurreducens (strain ATCC 51573 / DSM 12127 / PCA) protein is Ribosome maturation factor RimP.